The primary structure comprises 632 residues: Probable potassium transport system protein Kup (632 aa).

12 helical membrane passes run 20–40 (LLVAAVGVVYGDIGTSPLYTL), 60–80 (ILSLILWSLLWVVSFKYVMFI), 111–131 (LMVICGLIGASLFYGDSMITP), 146–166 (FDGIDHWVVPISLVVLVALFL), 178–198 (LFGPIMVTWFVVLAALGVHGI), 216–236 (FFIVHPGMGVAILGAVVLALT), 257–277 (WFALVLPALVLNYFGQGAILL), 289–309 (LLAPGWALLPLVGLATMATVI), 347–367 (IYIAAVNWTLMVGVVLLVIGF), 379–399 (VAVTGTMLMTTILVSAVMLLL), 404–424 (PVLAVPILIGFLLVDGLFFAA), and 429–449 (IVQGGAFPVLAGGVLFLLMST).

The protein belongs to the HAK/KUP transporter (TC 2.A.72) family.

Its subcellular location is the cell inner membrane. It catalyses the reaction K(+)(in) + H(+)(in) = K(+)(out) + H(+)(out). In terms of biological role, transport of potassium into the cell. Likely operates as a K(+):H(+) symporter. This Pseudomonas putida (strain W619) protein is Probable potassium transport system protein Kup.